Consider the following 441-residue polypeptide: Argininosuccinate lyase (441 aa).

The protein belongs to the lyase 1 family. Argininosuccinate lyase subfamily.

The protein localises to the cytoplasm. It carries out the reaction 2-(N(omega)-L-arginino)succinate = fumarate + L-arginine. It participates in amino-acid biosynthesis; L-arginine biosynthesis; L-arginine from L-ornithine and carbamoyl phosphate: step 3/3. The chain is Argininosuccinate lyase from Thermoanaerobacter pseudethanolicus (strain ATCC 33223 / 39E) (Clostridium thermohydrosulfuricum).